The following is a 362-amino-acid chain: MNTPLHLENIKQAPKALLHDHLDGGLRPATVLDIAGQVGYDRLPATDVESLETWFRTASHSGSLERYLEPFSHTVAVMQTPEALHRVAYECVEDLAADSVVYAEVRFAPELHIDEGLSFDEVLASVLAGFADGERACAAEGNAITVRCLVTAMRHAAMSREIAELAIRFRDKGVVGFDIAGAEAGHPPTRHLDAFEYMRSNNARFTIHAGEAFGLPSIHEAIAFCGADRLGHGVRIVDDIDVDPGGGIRLGPLASILRDKRIPLELCPSSNLQTGAVASITEHPFDLLAWARFRVTVNTDNRLMSDTSMSLEMHRLVEAFGYGWGDLERFTINAMKSAFIPFDQRLAIIDEVIKPRFAVLVG.

Zn(2+)-binding residues include H19 and H21. Residues H21, D23, and G181 each coordinate substrate. Residue H208 coordinates Zn(2+). E211 acts as the Proton donor in catalysis. Zn(2+) is bound at residue D300.

This sequence belongs to the metallo-dependent hydrolases superfamily. Adenosine and AMP deaminases family. Adenosine deaminase subfamily. It depends on Zn(2+) as a cofactor.

It catalyses the reaction adenosine + H2O + H(+) = inosine + NH4(+). The catalysed reaction is 2'-deoxyadenosine + H2O + H(+) = 2'-deoxyinosine + NH4(+). Functionally, catalyzes the hydrolytic deamination of adenosine and 2-deoxyadenosine. This Mycobacterium leprae (strain TN) protein is Adenosine deaminase.